Reading from the N-terminus, the 348-residue chain is Nitrogenase vanadium-iron protein beta chain (348 aa).

[8Fe-7S] cluster is bound by residues cysteine 31, cysteine 56, cysteine 115, and serine 153.

Belongs to the NifD/NifK/NifE/NifN family. In terms of assembly, hexamer of two alpha, two beta, and two delta chains. Requires [8Fe-7S] cluster as cofactor.

It catalyses the reaction N2 + 8 reduced [2Fe-2S]-[ferredoxin] + 16 ATP + 16 H2O = H2 + 8 oxidized [2Fe-2S]-[ferredoxin] + 2 NH4(+) + 16 ADP + 16 phosphate + 6 H(+). In terms of biological role, this vanadium-iron protein is part of the nitrogenase complex that catalyzes the key enzymatic reactions in nitrogen fixation. The polypeptide is Nitrogenase vanadium-iron protein beta chain (vnfK) (Azorhizophilus paspali (Azotobacter paspali)).